The following is a 628-amino-acid chain: Basal cell adhesion molecule (628 aa).

Residues 1-31 form the signal peptide; sequence MEPPDAPAQARGAPRLLLLAVLLAAHPDAQA. 2 consecutive Ig-like V-type domains span residues 32 to 142 and 147 to 257; these read EVRL…ARLN and PEAT…PTFH. The Extracellular segment spans residues 32–547; that stretch reads EVRLSVPPLV…GTVSPQTSQA (516 aa). 3 cysteine pairs are disulfide-bonded: cysteine 53–cysteine 125, cysteine 172–cysteine 237, and cysteine 291–cysteine 337. Ig-like C2-type domains lie at 274–355, 363–441, and 448–541; these read PSTP…KTLE, PLEL…QNFT, and PELK…GTVS. The tract at residues 309-312 is interaction with laminin alpha5; it reads EQEE. N-linked (GlcNAc...) asparagine glycosylation is found at asparagine 321, asparagine 377, asparagine 383, asparagine 419, and asparagine 439. An intrachain disulfide couples cysteine 384 to cysteine 424. Cysteine 473 and cysteine 522 are joined by a disulfide. A helical membrane pass occupies residues 548–568; it reads GVAVMAVAVSVGLLLLVVAVF. The Cytoplasmic segment spans residues 569–628; sequence YCVRRKGGPCCRQRREKGAPPPGEPGLSHSGSEQPEQTGLLMGGASGGARGGSGGFGDEC. A disordered region spans residues 579–628; it reads CRQRREKGAPPPGEPGLSHSGSEQPEQTGLLMGGASGGARGGSGGFGDEC. Serine 596 is modified (phosphoserine; by GSK3). At serine 598 the chain carries Phosphoserine; by CK2. The residue at position 600 (serine 600) is a Phosphoserine. The segment covering 609–628 has biased composition (gly residues); the sequence is LMGGASGGARGGSGGFGDEC. A Phosphoserine; by PKA or PKB/AKT1 modification is found at serine 621.

As to quaternary structure, homodimer. Interacts with ITGA4:ITGB1. Interacts with spectrins SPTA1 and SPTB1. Epinephrine-stimulated phosphorylation of Ser-621 by PKA enhances adhesion to laminin. Ser-621 can also be phosphorylated by AKT1. In terms of tissue distribution, wide tissue distribution (highest in the pancreas and very low in brain). Closely associated with the basal layer of cells in epithelia and the endothelium of blood vessel walls.

It is found in the cell membrane. Transmembrane glycoprotein that functions as both a receptor and an adhesion molecule playing a crucial role in cell adhesion, motility, migration and invasion. Extracellular domain enables binding to extracellular matrix proteins, such as laminin, integrin and other ligands while its intracellular domain interacts with cytoskeletal proteins like hemoglobin, facilitating cell signal transduction. Serves as a receptor for laminin alpha-5/LAMA5 to promote cell adhesion. Mechanistically, JAK2 induces BCAM phosphorylation and activates its adhesion to laminin by stimulating a Rap1/AKT signaling pathway in the absence of EPOR. This is Basal cell adhesion molecule (BCAM) from Homo sapiens (Human).